A 321-amino-acid polypeptide reads, in one-letter code: PI-PLC X domain-containing protein 3 (321 aa).

The PI-PLC X-box domain maps to 22–197 (SMHSIPLTNL…DYQVLVFYHS (176 aa)). Active-site residues include histidine 37 and histidine 114.

In terms of tissue distribution, expressed at highest levels in heart. Also detected in kidney, lung, small intestine and colon. Expressed at very low levels, if any, in leukocytes, thymus and skeletal muscle.

Its subcellular location is the cytoplasm. This Homo sapiens (Human) protein is PI-PLC X domain-containing protein 3 (PLCXD3).